The sequence spans 737 residues: Fibronectin type III domain-containing protein 7 (737 aa).

Residues 1–25 form the signal peptide; sequence MAGRPEKCFSLIRFTLLCLKMVISS. Fibronectin type-III domains follow at residues 28–115, 116–203, 204–288, 289–373, 374–459, 460–544, 545–633, and 631–715; these read APEI…TVLA, APVL…SPRA, PANI…TVAC, APGR…TAPC, CPND…TAPC, SPEI…TVPC, CPAG…CPLG, and PLGV…YSVT. An N-linked (GlcNAc...) asparagine glycan is attached at Asn-230. The N-linked (GlcNAc...) asparagine glycan is linked to Asn-433.

It is found in the secreted. This is Fibronectin type III domain-containing protein 7 (Fndc7) from Mus musculus (Mouse).